The following is a 276-amino-acid chain: Undecaprenyl-diphosphatase 1 (276 aa).

5 helical membrane passes run 85–105 (MNVV…EKTI), 108–128 (VLFA…VILW), 187–207 (VATE…TLYE), 217–237 (VDSI…AFAC), and 253–273 (FAWY…SGWI).

It belongs to the UppP family.

It localises to the cell inner membrane. It carries out the reaction di-trans,octa-cis-undecaprenyl diphosphate + H2O = di-trans,octa-cis-undecaprenyl phosphate + phosphate + H(+). In terms of biological role, catalyzes the dephosphorylation of undecaprenyl diphosphate (UPP). Confers resistance to bacitracin. In Burkholderia thailandensis (strain ATCC 700388 / DSM 13276 / CCUG 48851 / CIP 106301 / E264), this protein is Undecaprenyl-diphosphatase 1.